We begin with the raw amino-acid sequence, 371 residues long: Envelope glycoprotein M (371 aa).

The Intravirion portion of the chain corresponds to 1–13 (MAPSHVDKVNTRT). Residues 14–34 (WSASIVFMVLTFVNVSVHLVL) form a helical membrane-spanning segment. Over 35 to 79 (SNFPHLGYPCVYYHVVDFERLNMSAYNVMHLHTPMLFLDSVQLVC) the chain is Virion surface. The chain crosses the membrane as a helical span at residues 80-100 (YAVFMQLVFLAVTIYYLVCWI). Residues 101–126 (KISMRKDKGMSLNQSTRDISYMGDSL) lie on the Intravirion side of the membrane. The helical transmembrane segment at 127–147 (TAFLFILSMDTFQLFTLTMSF) threads the bilayer. Topologically, residues 148–151 (RLPS) are virion surface. Residues 152 to 172 (MIAFMAAVHFFCLTIFNVSMV) traverse the membrane as a helical segment. Residues 173-200 (TQYRSYKRSLFFFSRLHPKLKGTVQFRT) are Intravirion-facing. A helical membrane pass occupies residues 201 to 221 (LIVNLVEVALGFNTTVVAMAL). The Virion surface portion of the chain corresponds to 222-239 (CYGFGNNFFVRTGHMVLA). Residues 240–260 (VFVVYAIISIIYFLLIEAVFF) form a helical membrane-spanning segment. Over 261-264 (QYVK) the chain is Intravirion. Residues 265–285 (VQFGYHLGAFFGLCGLIYPIV) form a helical membrane-spanning segment. Over 286–298 (QYDTFLSNEYRTG) the chain is Virion surface. Residues 299–319 (ISWSFGMLFFIWAMFTTCRAV) form a helical membrane-spanning segment. The Intravirion portion of the chain corresponds to 320-371 (RYFRGRGSGSVKYQALATASGEEVAALSHHDSLESRRLREEEDDDDEDFEDA). A disordered region spans residues 346–371 (LSHHDSLESRRLREEEDDDDEDFEDA). A compositionally biased stretch (basic and acidic residues) spans 347 to 359 (SHHDSLESRRLRE). The span at 360–371 (EEDDDDEDFEDA) shows a compositional bias: acidic residues.

Belongs to the herpesviridae glycoprotein M family. Interacts (via N-terminus) with gN (via N-terminus). The gM-gN heterodimer forms the gCII complex.

The protein localises to the virion membrane. Its subcellular location is the host Golgi apparatus. It is found in the host trans-Golgi network. It localises to the host endosome membrane. The protein resides in the host nucleus inner membrane. In terms of biological role, envelope glycoprotein important for virion assembly and egress. Plays a role in the correct incorporation of gH-gL into virion membrane. Directs the glycoprotein N (gN) to the host trans-Golgi network. This Homo sapiens (Human) protein is Envelope glycoprotein M.